We begin with the raw amino-acid sequence, 591 residues long: Acyl-CoA-dependent acyltransferase MAC1 (591 aa).

The peroxisomal targeting signal type 1 stretch occupies residues 589 to 591 (ARL).

The protein belongs to the trichothecene O-acetyltransferase family.

It is found in the peroxisome. Its pathway is secondary metabolite biosynthesis. Acyl-CoA-dependent acyltransferase; part of the gene cluster that mediates the biosynthesis of mannosylerythritol lipids (MELs), surface-active substances that enhance the availability of water-insoluble substrates. Mannosylerythritol lipid production is responsible for hemolytic activity of Ustilago maydis. Depending on the number of acetyl groups, mannosylerythritol lipids can be differentiated into MEL A (fully acetylated), MEL B and MEL C (monoacetylated at R-6 and R-4, respectively), and the fully deacetylated MEL D. The first step in the pathway is the generation of mannosylerythritol by the glycosyltransferase EMT1 which catalyzes the transfer of GDP-mannose to the C-4 atom of meso-erythritol. This reaction has to be stereospecific, since only mannosyl-D-erythritol is generated. The produced disaccharide is subsequently acylated with fatty acids of various lengths derived from the peroxisomal beta-oxidation by the peroxisomal acyltransferases MAC1 and MAC2 at positions C-2 and C-3, repectively. The existence of MEL derivatives which carry an acetyl group at C-2 implies that at least MAC1 also accepts acetyl-CoA as a donor. The final step of MEL biosynthesis is the acetylation of the fully acylated mannosylerythritol lipids catalyzed by the acetyl-CoA-dependent acetyltransferase MAT1. MAT1 displays a relaxed regioselectivity and is able to transfer acetylgroups to both positions C-4 and C-6 of the mannosyl moiety. The sequence is that of Acyl-CoA-dependent acyltransferase MAC1 from Mycosarcoma maydis (Corn smut fungus).